Here is a 755-residue protein sequence, read N- to C-terminus: Polycomb protein SUZ12 (755 aa).

Disordered regions lie at residues 26-79 (KMGN…RRIS), 333-377 (NANG…SRRA), and 392-420 (AVGR…SDDR). The span at 30 to 42 (KASSQAQKRSQSQ) shows a compositional bias: low complexity. 2 stretches are compositionally biased toward polar residues: residues 43–57 (TGDS…DGSG) and 349–359 (TQPNGTHNEGT). Positions 411 to 420 (GEDHPPSDDR) are enriched in basic and acidic residues. The segment at 436–458 (FACLICGAENERLSQLRAHYMCH) adopts a C2H2-type zinc-finger fold. The segment at 580 to 645 (IDDSWLLLKH…KADWLVSKRS (66 aa)) is polycomb protein VEFS-Box.

The protein belongs to the VEFS (VRN2-EMF2-FIS2-SU(Z)12) family. Component of the polycomb repressive complex 2 (PRC2) that consists of four core subunits icluding EZH2, EED, SUZ12, and RBBP4, among which EZH2 is the catalytic subunit and which minimally requires EED and SUZ12 for catalysis.

Its subcellular location is the nucleus. Functionally, component of the of the Polycomb Repressive Complex 2 (PRC2), a histone H3 lysine methyltransferase responsible for generating mono-, di-, and tri-methylation on Lys27 (H3K27me1, H3K27me2 and H3K27me3). The tri-methylated form is known to be critical in gene repression, and its proper placement is essential in defining repression patterns during development. SUZ12 is not a catalytic subunit but is required for the complex regulation of histone H3 lysine methylation by EZH2. In Chaetomium thermophilum (strain DSM 1495 / CBS 144.50 / IMI 039719) (Thermochaetoides thermophila), this protein is Polycomb protein SUZ12.